Reading from the N-terminus, the 98-residue chain is MSVSIKPLEDRIVVKTLEAEQTTASGLVIPDTAKEKPQEGEVLAIGPGRVDDNGNRVPVDVAVGDVVIYSKYGGTEVKYAGQEYLILSARDVLAVVQK.

Belongs to the GroES chaperonin family. In terms of assembly, heptamer of 7 subunits arranged in a ring. Interacts with the chaperonin GroEL.

The protein resides in the cytoplasm. Its function is as follows. Together with the chaperonin GroEL, plays an essential role in assisting protein folding. The GroEL-GroES system forms a nano-cage that allows encapsulation of the non-native substrate proteins and provides a physical environment optimized to promote and accelerate protein folding. GroES binds to the apical surface of the GroEL ring, thereby capping the opening of the GroEL channel. The protein is Co-chaperonin GroES of Beutenbergia cavernae (strain ATCC BAA-8 / DSM 12333 / CCUG 43141 / JCM 11478 / NBRC 16432 / NCIMB 13614 / HKI 0122).